Reading from the N-terminus, the 193-residue chain is Spermatogenesis-associated protein 3 (193 aa).

Over residues 1 to 16 the composition is skewed to basic residues; it reads MKKVKKKKSDSRRRRN. Residues 1 to 92 form a disordered region; that stretch reads MKKVKKKKSD…SPFLVPMEPK (92 aa). A compositionally biased stretch (low complexity) spans 17 to 35; sequence SISPQTSSDSSQQPSSETP. The segment covering 36 to 48 has biased composition (pro residues); it reads PSCPEPASPPSKP.

As to expression, strongly expressed in testis. Faintly expressed in epididymis, ovary, spleen, kidney, lung, heart, brain, epididymis, liver and skeletal muscle.

The protein localises to the cell projection. It localises to the cilium. The protein resides in the flagellum. The protein is Spermatogenesis-associated protein 3 (Spata3) of Mus musculus (Mouse).